Reading from the N-terminus, the 1486-residue chain is Chromosome partition protein MukB (1486 aa).

Residue 34-41 (GGNGAGKS) participates in ATP binding. 3 coiled-coil regions span residues 326 to 418 (LEAD…QYNQ), 444 to 480 (LETF…QAYQ), and 509 to 603 (RHLA…RAPV). The segment at 666–783 (PGGSEDQRLN…EVPLFGRAAR (118 aa)) is flexible hinge. Coiled-coil stretches lie at residues 835–923 (EAEI…AKLE), 977–1115 (EMLS…TAKA), and 1209–1266 (VEAI…QNVS).

Belongs to the SMC family. MukB subfamily. In terms of assembly, homodimerization via its hinge domain. Binds to DNA via its C-terminal region. Interacts, and probably forms a ternary complex, with MukE and MukF via its C-terminal region. The complex formation is stimulated by calcium or magnesium. Interacts with tubulin-related protein FtsZ.

It localises to the cytoplasm. The protein localises to the nucleoid. Its function is as follows. Plays a central role in chromosome condensation, segregation and cell cycle progression. Functions as a homodimer, which is essential for chromosome partition. Involved in negative DNA supercoiling in vivo, and by this means organize and compact chromosomes. May achieve or facilitate chromosome segregation by condensation DNA from both sides of a centrally located replisome during cell division. This is Chromosome partition protein MukB from Escherichia coli O6:H1 (strain CFT073 / ATCC 700928 / UPEC).